Consider the following 476-residue polypeptide: Bifunctional protein HldE (476 aa).

The segment at 1–318 (MKVTLPDFRR…ENAIRGRAET (318 aa)) is ribokinase. Position 195-198 (195-198 (NLSE)) interacts with ATP. The active site involves aspartate 264. The segment at 344–476 (MTNGIFDILH…IIQSIKNGRG (133 aa)) is cytidylyltransferase.

This sequence in the N-terminal section; belongs to the carbohydrate kinase PfkB family. It in the C-terminal section; belongs to the cytidylyltransferase family. Homodimer.

It carries out the reaction D-glycero-beta-D-manno-heptose 7-phosphate + ATP = D-glycero-beta-D-manno-heptose 1,7-bisphosphate + ADP + H(+). The enzyme catalyses D-glycero-beta-D-manno-heptose 1-phosphate + ATP + H(+) = ADP-D-glycero-beta-D-manno-heptose + diphosphate. The protein operates within nucleotide-sugar biosynthesis; ADP-L-glycero-beta-D-manno-heptose biosynthesis; ADP-L-glycero-beta-D-manno-heptose from D-glycero-beta-D-manno-heptose 7-phosphate: step 1/4. Its pathway is nucleotide-sugar biosynthesis; ADP-L-glycero-beta-D-manno-heptose biosynthesis; ADP-L-glycero-beta-D-manno-heptose from D-glycero-beta-D-manno-heptose 7-phosphate: step 3/4. Its function is as follows. Catalyzes the phosphorylation of D-glycero-D-manno-heptose 7-phosphate at the C-1 position to selectively form D-glycero-beta-D-manno-heptose-1,7-bisphosphate. Catalyzes the ADP transfer from ATP to D-glycero-beta-D-manno-heptose 1-phosphate, yielding ADP-D-glycero-beta-D-manno-heptose. The chain is Bifunctional protein HldE from Yersinia pestis bv. Antiqua (strain Antiqua).